A 334-amino-acid chain; its full sequence is Leucine-rich repeat-containing protein 26 (334 aa).

Positions 1 to 30 (MRGSFFSRLPPQLSLLLLLLLLLSWRRVWT) are cleaved as a signal peptide. Topologically, residues 31-265 (QEHIGTDPSK…QCTQSLAARD (235 aa)) are extracellular. Positions 38-75 (PSKSPVAPVCPEACSCSPGGKANCSALALPAVPAGLSW) constitute an LRRNT domain. 2 disulfides stabilise this stretch: Cys47/Cys53 and Cys51/Cys61. 5 LRR repeats span residues 76 to 97 (QVRS…AFAD), 100 to 121 (ALLY…AFWG), 124 to 145 (VLQR…TFTP), 148 to 169 (ALSF…ILGP), and 172 to 194 (LLRV…LNSL). The region spanning 205-259 (NPWACSCALRPLCTWLRKHPRPTSETETLLCVSPKLQTLNLLTDFPDNAFKQCTQ) is the LRRCT domain. 2 disulfide bridges follow: Cys209-Cys235 and Cys211-Cys257. Residues 266–286 (LAVVYALGPASFLASLAICLA) traverse the membrane as a helical segment. At 287 to 334 (LGSVLTACGARRRRRRTTVRHLIRRQPDPEGPASLEDVGSPTTTAIQA) the chain is on the cytoplasmic side. The segment at 312-334 (QPDPEGPASLEDVGSPTTTAIQA) is disordered.

Interacts with KCNMA1.

The protein localises to the cell membrane. The protein resides in the cytoplasm. Its subcellular location is the cytoskeleton. Functionally, auxiliary protein of the large-conductance, voltage and calcium-activated potassium channel (BK alpha). Required for the conversion of BK alpha channels from a high-voltage to a low-voltage activated channel type in non-excitable cells. These are characterized by negative membrane voltages and constant low levels of calcium. In Rattus norvegicus (Rat), this protein is Leucine-rich repeat-containing protein 26 (Lrrc26).